Here is a 356-residue protein sequence, read N- to C-terminus: Leucoanthocyanidin dioxygenase (356 aa).

2 residues coordinate substrate: Tyr142 and Lys213. Residues Leu208–Pro307 form the Fe2OG dioxygenase domain. 2-oxoglutarate is bound at residue Asn215–Tyr217. Fe cation is bound at residue His232. Thr233 lines the substrate pocket. Fe cation is bound by residues Asp234 and His288. Residue Arg298 to Ser300 participates in 2-oxoglutarate binding. Substrate contacts are provided by Glu306 and Lys341.

This sequence belongs to the iron/ascorbate-dependent oxidoreductase family. The cofactor is L-ascorbate. Fe(2+) is required as a cofactor. Expressed in young seedlings (at protein level).

The catalysed reaction is a (2R,3S,4S)-leucoanthocyanidin + 2-oxoglutarate + O2 = a 4-H-anthocyanidin with a 3-hydroxy group + succinate + CO2 + 2 H2O. It carries out the reaction (2R,3S,4S)-3,4-leucopelargonidin + 2-oxoglutarate + O2 = (4S)-2,3-dehydroleucopelargonidin + succinate + CO2 + H2O + H(+). It catalyses the reaction (2R,3S,4S)-leucocyanidin + 2-oxoglutarate + O2 = (4S)-2,3-dehydroleucocyanidin + succinate + CO2 + H2O + H(+). The protein operates within pigment biosynthesis; anthocyanin biosynthesis. In terms of biological role, involved in anthocyanin and protoanthocyanidin biosynthesis by catalyzing the oxidation of leucoanthocyanidins into anthocyanidins. Possesses low flavonol synthase activity in vitro towards dihydrokaempferol and dihydroquercetin producing kaempferol and quercitin, respectively. The chain is Leucoanthocyanidin dioxygenase (LDOX) from Arabidopsis thaliana (Mouse-ear cress).